Reading from the N-terminus, the 464-residue chain is UDP-N-acetylmuramoylalanine--D-glutamate ligase (464 aa).

Residue 112-118 (GTDGKTT) coordinates ATP.

Belongs to the MurCDEF family.

Its subcellular location is the cytoplasm. It catalyses the reaction UDP-N-acetyl-alpha-D-muramoyl-L-alanine + D-glutamate + ATP = UDP-N-acetyl-alpha-D-muramoyl-L-alanyl-D-glutamate + ADP + phosphate + H(+). The protein operates within cell wall biogenesis; peptidoglycan biosynthesis. In terms of biological role, cell wall formation. Catalyzes the addition of glutamate to the nucleotide precursor UDP-N-acetylmuramoyl-L-alanine (UMA). In Pelodictyon phaeoclathratiforme (strain DSM 5477 / BU-1), this protein is UDP-N-acetylmuramoylalanine--D-glutamate ligase.